We begin with the raw amino-acid sequence, 551 residues long: MSNEDILVPAALSTHQDESDFTFQKFDSDSMERSFYLGPLSSQDELWDKLMQYYSIDKLIAYLQRNPEYVQITLQFPDTLVKDSSFIIRALQDKLDGDGAGRKFWALADTAYSACCVDEVAAEHVKGDLVIHFGDACLNAIQKLPVVYDFGKPFLDTDVLLACFTEEFKDKDQKICLMSNASYTHHIPDLYSRLKSNGYTNVVYSVVNTGLLTETAEIIDNTTPLSDTDELFTLGNRVLMGARQEEDIDEETLRNEYALFHITMPHDPHLLYLTTVFESIHTYDVADQVISNGPYPSLTRRYKNMHKARTAGCIGILVNTLSIRGTRETVNKLIKLIRENGKKHYLFVVGKPNVPKLANFEPVDIWCILGCGQSGIIVDEFGEFYKPIITPYELTLALNFEVTWTGKWIIDFQKAITEIDNSLAELGIDDSKHGNDSDHDLDAPEFDAVTGKYVSSSRPLRALNHLQLDAPSNEDKQVMARVNGGTVIKGTVSTAVEHLANRAWTGLGSDYKDDEGYEEDGATVEEGISGIARGYEFDQEDAARKSQNQSQ.

Cys116, Cys137, and Cys371 together coordinate [4Fe-4S] cluster.

The protein belongs to the DPH1/DPH2 family. DPH2 subfamily. In terms of assembly, component of the 2-(3-amino-3-carboxypropyl)histidine synthase complex composed of DPH1, DPH2, DPH3 and a NADH-dependent reductase, predominantly CBR1. [4Fe-4S] cluster is required as a cofactor.

It localises to the cytoplasm. It functions in the pathway protein modification; peptidyl-diphthamide biosynthesis. In terms of biological role, required for the first step of diphthamide biosynthesis, a post-translational modification of histidine which occurs in elongation factor 2. DPH1 and DPH2 transfer a 3-amino-3-carboxypropyl (ACP) group from S-adenosyl-L-methionine (SAM) to a histidine residue, the reaction is assisted by a reduction system comprising DPH3 and a NADH-dependent reductase, predominantly CBR1. Facilitates the reduction of the catalytic iron-sulfur cluster found in the DPH1 subunit. The chain is 2-(3-amino-3-carboxypropyl)histidine synthase subunit 2 (DPH2) from Candida glabrata (strain ATCC 2001 / BCRC 20586 / JCM 3761 / NBRC 0622 / NRRL Y-65 / CBS 138) (Yeast).